The following is a 374-amino-acid chain: Ribosomal RNA large subunit methyltransferase G (374 aa).

Belongs to the methyltransferase superfamily. RlmG family.

The protein localises to the cytoplasm. It catalyses the reaction guanosine(1835) in 23S rRNA + S-adenosyl-L-methionine = N(2)-methylguanosine(1835) in 23S rRNA + S-adenosyl-L-homocysteine + H(+). In terms of biological role, specifically methylates the guanine in position 1835 (m2G1835) of 23S rRNA. In Pseudomonas putida (strain GB-1), this protein is Ribosomal RNA large subunit methyltransferase G.